Reading from the N-terminus, the 84-residue chain is Replication regulatory protein repA2 (84 aa).

Residues 1 to 13 are compositionally biased toward polar residues; the sequence is MSQTENAVTSSSG. The tract at residues 1–31 is disordered; that stretch reads MSQTENAVTSSSGAKRAYRKGNPLSDAEKQR.

In terms of biological role, this protein is involved in the determination of copy number in gene replication. It binds to the repA promoter thus inhibiting the synthesis of the mRNA for the initiator protein repA. The sequence is that of Replication regulatory protein repA2 (repA2) from Escherichia coli O157:H7.